Here is a 461-residue protein sequence, read N- to C-terminus: Fumarate hydratase class II (461 aa).

Substrate contacts are provided by residues 97-99 (SGT), 127-130 (HPND), 137-139 (SSN), and Thr-185. The active-site Proton donor/acceptor is His-186. Ser-316 is a catalytic residue. Residues Ser-317 and 322–324 (KVN) each bind substrate.

Belongs to the class-II fumarase/aspartase family. Fumarase subfamily. Homotetramer.

The protein resides in the cytoplasm. It carries out the reaction (S)-malate = fumarate + H2O. The protein operates within carbohydrate metabolism; tricarboxylic acid cycle; (S)-malate from fumarate: step 1/1. In terms of biological role, involved in the TCA cycle. Catalyzes the stereospecific interconversion of fumarate to L-malate. This is Fumarate hydratase class II from Staphylococcus epidermidis (strain ATCC 35984 / DSM 28319 / BCRC 17069 / CCUG 31568 / BM 3577 / RP62A).